Reading from the N-terminus, the 576-residue chain is 60 kDa heat shock protein homolog 2, mitochondrial (576 aa).

A mitochondrion-targeting transit peptide spans 1–61 (MMRMFRYTNT…AVTMGPKGRN (61 aa)).

It belongs to the chaperonin (HSP60) family. First detectable expression is seen in the posterior part of the dorsal tracheal trunk at stage 14-15, which marks the beginning of terminal tracheation. In the larval gut, expression in proventriculus is stronger than in midgut and hindgut. Malpighian tubules shows low expression and late third instar larval imaginal disks and brain showed moderate expression. In larval ovary and testis, expression is strong in the posterior region.

The protein resides in the mitochondrion matrix. Functionally, prevents misfolding and promotes the refolding and proper assembly of unfolded polypeptides generated under stress conditions. Essential for proper development of trachea, spermatogonia and spermatocytes. The polypeptide is 60 kDa heat shock protein homolog 2, mitochondrial (Hsp60C) (Drosophila melanogaster (Fruit fly)).